The chain runs to 229 residues: Ribonuclease 3 (229 aa).

Residues 5–127 (LARLERKLGY…LIGAIYLDAD (123 aa)) enclose the RNase III domain. Glu-40 serves as a coordination point for Mg(2+). Residue Asp-44 is part of the active site. Mg(2+)-binding residues include Asp-113 and Glu-116. Residue Glu-116 is part of the active site. The DRBM domain maps to 154–224 (DPKTRLQEFL…AAAALIALGV (71 aa)).

Belongs to the ribonuclease III family. As to quaternary structure, homodimer. Requires Mg(2+) as cofactor.

The protein localises to the cytoplasm. The enzyme catalyses Endonucleolytic cleavage to 5'-phosphomonoester.. Digests double-stranded RNA. Involved in the processing of primary rRNA transcript to yield the immediate precursors to the large and small rRNAs (23S and 16S). Processes some mRNAs, and tRNAs when they are encoded in the rRNA operon. Processes pre-crRNA and tracrRNA of type II CRISPR loci if present in the organism. The chain is Ribonuclease 3 from Pseudomonas putida (strain W619).